We begin with the raw amino-acid sequence, 115 residues long: Pro-FMRFamide-related neuropeptide FF (115 aa).

Positions 1-22 are cleaved as a signal peptide; that stretch reads MDARQAAALLLVLLLVTDWSHA. Disordered stretches follow at residues 20–51 and 78–102; these read SHAEGPGGRDGGDQIFMEEDSGAHPAQDAQTP and FGRNTRGSWSNKRLSPRAGEGLSSP. Residues 23–66 constitute a propeptide that is removed on maturation; it reads EGPGGRDGGDQIFMEEDSGAHPAQDAQTPRSLLRSLLQAMQRPG. Phe-78 is modified (phenylalanine amide). A propeptide spanning residues 81 to 94 is cleaved from the precursor; that stretch reads NTRGSWSNKRLSPR. Phe-112 carries the post-translational modification Phenylalanine amide.

This sequence belongs to the FARP (FMRFamide related peptide) family.

It localises to the secreted. Morphine modulating peptides. Have wide-ranging physiologic effects, including the modulation of morphine-induced analgesia, elevation of arterial blood pressure, and increased somatostatin secretion from the pancreas. The neuropeptide FF potentiates and sensitizes ASIC3 cation channel. This Bos taurus (Bovine) protein is Pro-FMRFamide-related neuropeptide FF (NPFF).